The following is a 162-amino-acid chain: Anaerobic nitrite reductase GLB1 (162 aa).

Positions 9 to 159 constitute a Globin domain; it reads VFSEEKEALV…LVAAIKQEMK (151 aa). The Homodimerization motif lies at 42-46; the sequence is EIAPS. Residues Lys66, His70, Arg100, Thr104, and His105 each coordinate heme b. A Homodimerization motif is present at residues 112 to 124; the sequence is DGHFEVTRFALLE.

Belongs to the plant globin family. In terms of assembly, homodimer. Heme b serves as cofactor. As to expression, seeds and roots.

It localises to the cytoplasm. It is found in the nucleus. The catalysed reaction is Fe(III)-heme b-[protein] + nitric oxide + H2O = Fe(II)-heme b-[protein] + nitrite + 2 H(+). In terms of biological role, phytoglobin that reduces nitrite to nitric oxide (NO) under anoxic conditions (e.g. during flooding or in waterlogged soil). May not function as an oxygen storage or transport protein. Has an unusually high affinity for O(2) through an hexacoordinate heme iron because of a very low dissociation constant. The protein is Anaerobic nitrite reductase GLB1 of Hordeum vulgare (Barley).